The primary structure comprises 700 residues: Chondroitinase-AC (700 aa).

Positions 1-22 (MKKLFVTCIVFFSILSPALLIA) are cleaved as a signal peptide. Active-site residues include histidine 225, tyrosine 234, and arginine 288. The O-linked (Man...) serine glycan is linked to serine 328. Ca(2+) contacts are provided by glutamate 405, aspartate 407, aspartate 416, and tyrosine 417. Residue serine 455 is glycosylated (O-linked (Man...) serine).

The protein belongs to the polysaccharide lyase 8 family. Monomer. Ca(2+) is required as a cofactor.

It catalyses the reaction Eliminative degradation of polysaccharides containing 1,4-beta-D-hexosaminyl and 1,3-beta-D-glucuronosyl linkages to disaccharides containing 4-deoxy-beta-D-gluc-4-enuronosyl groups.. This is Chondroitinase-AC (cslA) from Pedobacter heparinus (strain ATCC 13125 / DSM 2366 / CIP 104194 / JCM 7457 / NBRC 12017 / NCIMB 9290 / NRRL B-14731 / HIM 762-3).